We begin with the raw amino-acid sequence, 272 residues long: Hydroxyethylthiazole kinase (272 aa).

Met-45 provides a ligand contact to substrate. ATP-binding residues include Arg-121 and Thr-168. Gly-195 is a binding site for substrate.

It belongs to the Thz kinase family. In terms of assembly, homotrimer. Mg(2+) serves as cofactor.

The enzyme catalyses 5-(2-hydroxyethyl)-4-methylthiazole + ATP = 4-methyl-5-(2-phosphooxyethyl)-thiazole + ADP + H(+). The protein operates within cofactor biosynthesis; thiamine diphosphate biosynthesis; 4-methyl-5-(2-phosphoethyl)-thiazole from 5-(2-hydroxyethyl)-4-methylthiazole: step 1/1. Functionally, catalyzes the phosphorylation of the hydroxyl group of 4-methyl-5-beta-hydroxyethylthiazole (THZ). In Bacillus subtilis (strain 168), this protein is Hydroxyethylthiazole kinase.